The primary structure comprises 225 residues: NAD(P)H-quinone oxidoreductase subunit K, chloroplastic (225 aa).

The [4Fe-4S] cluster site is built by C43, C44, C108, and C139.

The protein belongs to the complex I 20 kDa subunit family. NDH is composed of at least 16 different subunits, 5 of which are encoded in the nucleus. Requires [4Fe-4S] cluster as cofactor.

The protein resides in the plastid. It localises to the chloroplast thylakoid membrane. The enzyme catalyses a plastoquinone + NADH + (n+1) H(+)(in) = a plastoquinol + NAD(+) + n H(+)(out). It carries out the reaction a plastoquinone + NADPH + (n+1) H(+)(in) = a plastoquinol + NADP(+) + n H(+)(out). NDH shuttles electrons from NAD(P)H:plastoquinone, via FMN and iron-sulfur (Fe-S) centers, to quinones in the photosynthetic chain and possibly in a chloroplast respiratory chain. The immediate electron acceptor for the enzyme in this species is believed to be plastoquinone. Couples the redox reaction to proton translocation, and thus conserves the redox energy in a proton gradient. This Vitis vinifera (Grape) protein is NAD(P)H-quinone oxidoreductase subunit K, chloroplastic.